The sequence spans 188 residues: Elongation factor P (188 aa).

This sequence belongs to the elongation factor P family.

It is found in the cytoplasm. The protein operates within protein biosynthesis; polypeptide chain elongation. Involved in peptide bond synthesis. Stimulates efficient translation and peptide-bond synthesis on native or reconstituted 70S ribosomes in vitro. Probably functions indirectly by altering the affinity of the ribosome for aminoacyl-tRNA, thus increasing their reactivity as acceptors for peptidyl transferase. The chain is Elongation factor P from Malacoplasma penetrans (strain HF-2) (Mycoplasma penetrans).